Here is a 103-residue protein sequence, read N- to C-terminus: Large ribosomal subunit protein bL21 (103 aa).

It belongs to the bacterial ribosomal protein bL21 family. Part of the 50S ribosomal subunit. Contacts protein L20.

Its function is as follows. This protein binds to 23S rRNA in the presence of protein L20. The chain is Large ribosomal subunit protein bL21 from Bordetella parapertussis (strain 12822 / ATCC BAA-587 / NCTC 13253).